A 90-amino-acid polypeptide reads, in one-letter code: Probable Fe(2+)-trafficking protein (90 aa).

This sequence belongs to the Fe(2+)-trafficking protein family.

Its function is as follows. Could be a mediator in iron transactions between iron acquisition and iron-requiring processes, such as synthesis and/or repair of Fe-S clusters in biosynthetic enzymes. The chain is Probable Fe(2+)-trafficking protein from Halorhodospira halophila (strain DSM 244 / SL1) (Ectothiorhodospira halophila (strain DSM 244 / SL1)).